The primary structure comprises 100 residues: Defensin-6 (100 aa).

The N-terminal stretch at 1–19 (MRTLTILTAVLLVALQAKA) is a signal peptide. A propeptide spanning residues 20 to 68 (EPLQAEDDPLQAKAYEADAQEQRGANDQDFAVSFAEDASSSLRALGSTR) is cleaved from the precursor. Intrachain disulfides connect Cys72–Cys99, Cys74–Cys88, and Cys78–Cys98.

Belongs to the alpha-defensin family. In terms of assembly, homodimer. Self-assembles into higher-order oligomers termed nanonets, fibril-like structures that entrap microbes. Self-assembly into nanonets seems to protect against proteolytic digestion in duodenal fluid. Interacts with Y.enterocolitica invasin and S.typhimurium fliC/flagellin; the interaction creates an anchoring site for progressive DEFA6 self-assembly into nanonets. In terms of processing, proteolytically cleaved by trypsin at Arg-68; the propeptide is stored in the tissue of the small intestine and the mature peptide is found in the luminal fluid; cleavage may occur during or after release into the lumen. The N-terminal propeptide region suppresses self-assembly and renders DEFA6 propeptide unable to agglutinate bacteria and protect human epithelial cells from bacterial invasion. Post-translationally, under reducing conditions, naturally present in the gut owing to the low redox potential or enzymatically generated by the thioredoxin system, the disulfide bridges are opened leading to a conformational change of DEF6, thereby changing its antimicrobial spectrum. The reduced form exhibits inhibitory activity against anaerobic bacteria, in contrast to the minimal antimicrobial activity of the disulfide-linked oxidized form. The formation of higher-order nanonets and bacterial entrapment is independent of the redox state. As to expression, expressed in Paneth cells of the small intestine (at protein level).

It is found in the secreted. The protein localises to the cytoplasmic vesicle. The protein resides in the secretory vesicle. Functionally, host-defense peptide that contributes to intestinal innate immunity and mediates homeostasis at mucosal surfaces by forming higher-order oligomers that capture bacteria and prevent microbial invasion of the epithelium. After binding to bacterial surface proteins, undergoes ordered self-assembly to form fibril-like nanonets that surround and entangle bacteria and thereby prevent bacterial invasion across the epithelial barrier. Entangles and agglutinates Gram-negative bacteria, such as E.coli, S.typhimurium and Y.enterocolitica, and Gram-positive bacteria such as L.monocytogenes, thereby protecting the intestine against invasion by enteric bacterial pathogens. Blocks adhesion of C.albicans to intestinal epithelial cells and thereby suppresses fungal invasion of epithelial cells and biofilm formation. Under reducing conditions and in an acidic environment similar to the intestinal milieu, exhibits inhibitory activity against anaerobic bacteria such as B.adolescentis, L.acidophilus and B.breve, as well as B.longum and S.thermophilus, possibly by leading to alterations in bacterial cell envelope structures. The disulfide-linked oxidized form exhibits negligible antimicrobial activity against Gram-negative and Gram-positive bacteria, as compared to the enteric defensin DEFA5. In Homo sapiens (Human), this protein is Defensin-6 (DEFA6).